A 286-amino-acid chain; its full sequence is 4-hydroxybenzoate octaprenyltransferase (286 aa).

The next 7 helical transmembrane spans lie at 21-40, 95-115, 142-162, 167-187, 210-230, 235-255, and 266-286; these read GTLL…AGGM, ILFV…NGLV, FLGI…TGEV, WWLF…YAMV, QIIG…GWSA, LYGL…MLIF, and FLNN…DYLI.

It belongs to the UbiA prenyltransferase family. Mg(2+) is required as a cofactor.

The protein resides in the cell inner membrane. It carries out the reaction all-trans-octaprenyl diphosphate + 4-hydroxybenzoate = 4-hydroxy-3-(all-trans-octaprenyl)benzoate + diphosphate. It functions in the pathway cofactor biosynthesis; ubiquinone biosynthesis. Its function is as follows. Catalyzes the prenylation of para-hydroxybenzoate (PHB) with an all-trans polyprenyl group. Mediates the second step in the final reaction sequence of ubiquinone-8 (UQ-8) biosynthesis, which is the condensation of the polyisoprenoid side chain with PHB, generating the first membrane-bound Q intermediate 3-octaprenyl-4-hydroxybenzoate. This is 4-hydroxybenzoate octaprenyltransferase from Shewanella baltica (strain OS185).